Consider the following 262-residue polypeptide: Elongator complex protein 5 (262 aa).

Disordered stretches follow at residues 181–214 (TPLD…FKIE) and 229–262 (PYER…DLCI). The segment covering 200–211 (AEQTTEPASSTF) has biased composition (polar residues). The segment covering 246 to 262 (DADDDFDEEDPDEDLCI) has biased composition (acidic residues).

This sequence belongs to the ELP5 family. In terms of assembly, component of the elongator complex composed of Elp1, Elp2, Elp3, Elp4, Elp5 and Elp6. The elongator complex associates with and stabilizes microtubules; efficient interaction requires the full complex.

Its subcellular location is the cytoplasm. The protein localises to the nucleus. It localises to the cytoskeleton. The protein resides in the spindle. It functions in the pathway tRNA modification; 5-methoxycarbonylmethyl-2-thiouridine-tRNA biosynthesis. Its function is as follows. Component of the elongator complex, which is required for multiple tRNA modifications, including mcm5U (5-methoxycarbonylmethyl uridine), mcm5s2U (5-methoxycarbonylmethyl-2-thiouridine), and ncm5U (5-carbamoylmethyl uridine). The elongator complex catalyzes the formation of carboxymethyluridine in the wobble base at position 34 in tRNAs. Binding by the elongator complex stabilizes microtubules and promotes their growth. This induces central spindle asymmetry, promoting polarized signaling endosome trafficking during asymmetric cell division and cell fate assignation of sensory organ precursor cells. This is Elongator complex protein 5 from Drosophila melanogaster (Fruit fly).